A 715-amino-acid polypeptide reads, in one-letter code: Ribosomal RNA large subunit methyltransferase K/L (715 aa).

Positions 43–154 (TQYRALLWSR…RDDLVLSLDL (112 aa)) constitute a THUMP domain.

This sequence belongs to the methyltransferase superfamily. RlmKL family.

It localises to the cytoplasm. It carries out the reaction guanosine(2445) in 23S rRNA + S-adenosyl-L-methionine = N(2)-methylguanosine(2445) in 23S rRNA + S-adenosyl-L-homocysteine + H(+). It catalyses the reaction guanosine(2069) in 23S rRNA + S-adenosyl-L-methionine = N(2)-methylguanosine(2069) in 23S rRNA + S-adenosyl-L-homocysteine + H(+). Functionally, specifically methylates the guanine in position 2445 (m2G2445) and the guanine in position 2069 (m7G2069) of 23S rRNA. In Mannheimia succiniciproducens (strain KCTC 0769BP / MBEL55E), this protein is Ribosomal RNA large subunit methyltransferase K/L.